Consider the following 66-residue polypeptide: Protein translocase subunit SecE (66 aa).

The chain crosses the membrane as a helical span at residues 29 to 49 (LVASTLVVVVAVFIFSLICLV).

This sequence belongs to the SecE/SEC61-gamma family. Component of the Sec protein translocase complex. Heterotrimer consisting of SecY, SecE and SecG subunits. The heterotrimers can form oligomers, although 1 heterotrimer is thought to be able to translocate proteins. Interacts with the ribosome. Interacts with SecDF, and other proteins may be involved. Interacts with SecA.

It is found in the cell inner membrane. Functionally, essential subunit of the Sec protein translocation channel SecYEG. Clamps together the 2 halves of SecY. May contact the channel plug during translocation. This Rickettsia felis (strain ATCC VR-1525 / URRWXCal2) (Rickettsia azadi) protein is Protein translocase subunit SecE.